Here is a 312-residue protein sequence, read N- to C-terminus: Methionyl-tRNA formyltransferase (312 aa).

(6S)-5,6,7,8-tetrahydrofolate is bound at residue 109-112; sequence SLLP.

Belongs to the Fmt family.

The catalysed reaction is L-methionyl-tRNA(fMet) + (6R)-10-formyltetrahydrofolate = N-formyl-L-methionyl-tRNA(fMet) + (6S)-5,6,7,8-tetrahydrofolate + H(+). Its function is as follows. Attaches a formyl group to the free amino group of methionyl-tRNA(fMet). The formyl group appears to play a dual role in the initiator identity of N-formylmethionyl-tRNA by promoting its recognition by IF2 and preventing the misappropriation of this tRNA by the elongation apparatus. The chain is Methionyl-tRNA formyltransferase from Listeria innocua serovar 6a (strain ATCC BAA-680 / CLIP 11262).